A 61-amino-acid chain; its full sequence is Small ribosomal subunit protein uS14 (61 aa).

Residues Cys-24, Cys-27, Cys-40, and Cys-43 each contribute to the Zn(2+) site.

Belongs to the universal ribosomal protein uS14 family. Zinc-binding uS14 subfamily. Part of the 30S ribosomal subunit. Contacts proteins S3 and S10. Requires Zn(2+) as cofactor.

Binds 16S rRNA, required for the assembly of 30S particles and may also be responsible for determining the conformation of the 16S rRNA at the A site. The protein is Small ribosomal subunit protein uS14 of Desulforamulus reducens (strain ATCC BAA-1160 / DSM 100696 / MI-1) (Desulfotomaculum reducens).